A 1150-amino-acid polypeptide reads, in one-letter code: Serine/threonine-protein phosphatase 2A regulatory subunit B'' subunit alpha (1150 aa).

Residues 661 to 693 are disordered; the sequence is PEVIKIQNKPEKKPGTPLPPPATSPSSPRPLSP. Pro residues predominate over residues 676–693; the sequence is TPLPPPATSPSSPRPLSP. EF-hand domains lie at 758–793 and 972–1007; these read CPLYWKAPMFRAAGGEKTGFVTAQSFIAMWRKLLNN and RNPTSIEYWFRCMDVDGDGVLSMYELEYFYEEQCER. Residues Asp985, Asp987, Asp989, and Glu996 each coordinate Ca(2+). The interval 1105–1132 is disordered; that stretch reads AQFQEGFEDYETDEPASPSEFGNKSNKI.

PP2A consists of a common heterodimeric core enzyme, composed of a 36 kDa catalytic subunit (subunit C) and a 65 kDa constant regulatory subunit (PR65 or subunit A), that associates with a variety of regulatory subunits. Proteins that associate with the core dimer include three families of regulatory subunits B (the R2/B/PR55/B55, R3/B''/PR72/PR130/PR59 and R5/B'/B56 families), the 48 kDa variable regulatory subunit, viral proteins, and cell signaling molecules. As to expression, expressed in heart, brain, placenta, lung, muscle and kidney.

Functionally, the B regulatory subunit might modulate substrate selectivity and catalytic activity, and might also direct the localization of the catalytic enzyme to a particular subcellular compartment. The polypeptide is Serine/threonine-protein phosphatase 2A regulatory subunit B'' subunit alpha (PPP2R3A) (Homo sapiens (Human)).